A 236-amino-acid polypeptide reads, in one-letter code: Small ribosomal subunit protein uS3 (236 aa).

A KH type-2 domain is found at 39–107 (IRSYVLEELR…ETSLNIVEIR (69 aa)). The interval 214–236 (ASERRATEADQSGSSSNRRRENA) is disordered.

It belongs to the universal ribosomal protein uS3 family. Part of the 30S ribosomal subunit. Forms a tight complex with proteins S10 and S14.

In terms of biological role, binds the lower part of the 30S subunit head. Binds mRNA in the 70S ribosome, positioning it for translation. The chain is Small ribosomal subunit protein uS3 from Bartonella tribocorum (strain CIP 105476 / IBS 506).